The sequence spans 558 residues: MSVVMLVFRVLLLIALVGNSAIGLSLMPFIAPPDPDWTPDDYYYSYEQSSPDKDASVTQTSPENPDWYYEDDDPCQSNPCEHGGDCIIRGNTFSCSCPAPFSGSRCQTVQNKCKDNPCVQGDCLITQTPPYYRCACKYPYTGPDCSKVLPVCRPNPCQNGGVCSRHRRRSRFSCACPDQYKGRFCEIGPDDCYVGDGYSYRGKVSRTVNQNPCLYWNSHLLLQENYNMFMEDAETHGIADHNFCRNPDGDHKPWCFVKVNSEKVKWEYCNVEVCPESDAANPVGSLQEPVMELPGFDSCGKTEMTEHAVKRIYGGFKSTAGKHPWQVSLQTSLPLTTSMPQGHFCGGSLIHPCWVLTAAHCTDMSTKHLKVVLGDQDLKKTESHEQTFRVEKILKYSQYNERDEIPHNDIALLKLKPVGGHCALESKYVKTVCLPSDPFPSGTECHISGWGVTETGEGSRQLLDAKVKLIANALCNSRQLYDHTIDDSMICAGNLQKPGSDTCQGDSGGPLTCEKDGTYYVYGIVSWGQECGKKPGVYTQVTKFLNWIKTTMHKEAGL.

The first 23 residues, 1 to 23 (MSVVMLVFRVLLLIALVGNSAIG), serve as a signal peptide directing secretion. 3 EGF-like domains span residues 71-107 (DDDP…SRCQ), 109-146 (VQNK…PDCS), and 148-186 (VLPV…RFCE). Cystine bridges form between cysteine 75–cysteine 86, cysteine 80–cysteine 95, cysteine 97–cysteine 106, cysteine 113–cysteine 123, cysteine 118–cysteine 134, cysteine 136–cysteine 145, cysteine 152–cysteine 163, cysteine 157–cysteine 174, cysteine 176–cysteine 185, cysteine 192–cysteine 274, cysteine 213–cysteine 255, cysteine 244–cysteine 269, cysteine 299–cysteine 433, cysteine 345–cysteine 361, cysteine 353–cysteine 422, cysteine 445–cysteine 513, cysteine 475–cysteine 491, and cysteine 503–cysteine 531. The Kringle domain maps to 191–274 (DCYVGDGYSY…KWEYCNVEVC (84 aa)). The 242-residue stretch at 312 to 553 (IYGGFKSTAG…FLNWIKTTMH (242 aa)) folds into the Peptidase S1 domain. Active-site charge relay system residues include histidine 360 and aspartate 409. Residue serine 507 is the Charge relay system of the active site.

This sequence belongs to the peptidase S1 family. Heterodimer; disulfide-linked. Heterodimer of a 50 kDa heavy and a 27 kDa light chain linked by a disulfide bond. Proteolytic cleavage at Gly-23 or Met-27 can give rise to the 50 kDa heavy chain (HC) and cleavage at Arg-311 or Lys-317 can give rise to the 27 kDa light chain (LC). The HC can undergo further proteolytic cleavage giving rise to a 26 kDa fragment. The LC can undergo further proteolytic cleavage at Arg-311 leading to a 17-kDa fragment and at Arg-478 leading to a 8-kDa fragment.

It localises to the secreted. Cleaves the alpha-chain at multiple sites and the beta-chain between 'Lys-53' and 'Lys-54' but not the gamma-chain of fibrinogen and therefore does not initiate the formation of the fibrin clot and does not cause the fibrinolysis directly. It does not cleave (activate) prothrombin and plasminogen but converts the inactive single chain urinary plasminogen activator (pro-urokinase) to the active two chain form. Activates coagulation factor VII. May function as a tumor suppressor negatively regulating cell proliferation and cell migration. The sequence is that of Factor VII-activating protease from Rattus norvegicus (Rat).